Consider the following 405-residue polypeptide: Palmitoyltransferase PFA5 (405 aa).

The next 5 membrane-spanning stretches (helical) occupy residues 12 to 32, 51 to 71, 154 to 174, 191 to 211, and 310 to 330; these read YIKL…NYAI, IILW…WVLI, LFFM…LIYC, FIVL…LFGI, and FYTL…FIDI. One can recognise a DHHC domain in the interval 111 to 161; sequence YYCSNSNSIKLERSFFSKDVGYNVIKFDHYCIWIGQPIGQDNYLFFMKFMM.

This sequence belongs to the DHHC palmitoyltransferase family. PFA5 subfamily. Autopalmitoylated.

The protein localises to the membrane. The catalysed reaction is L-cysteinyl-[protein] + hexadecanoyl-CoA = S-hexadecanoyl-L-cysteinyl-[protein] + CoA. In Candida albicans (strain SC5314 / ATCC MYA-2876) (Yeast), this protein is Palmitoyltransferase PFA5 (PFA5).